The following is a 349-amino-acid chain: Sperm acrosomal protein FSA-ACR.1 (349 aa).

Residues 1–8 (MKEVYLVG) form the signal peptide. A disordered region spans residues 1-265 (MKEVYLVGYA…EQPSGIPPSS (265 aa)). The span at 63-114 (TSGEHTSVEHASAEHSSTEHTSGEHASGEHTSGERATGEHTSSEHATSEHTS) shows a compositional bias: basic and acidic residues. 2 stretches are compositionally biased toward polar residues: residues 117-142 (QPSG…SGEQ) and 154-171 (SGEQ…TSGE). Basic and acidic residues predominate over residues 178-189 (PSGEHAVAEKPS). Low complexity predominate over residues 221–248 (EQASIEKASSEQASAEQASAEQASSEQA). The N-linked (GlcNAc...) asparagine glycan is linked to Asn-342.

To acrosomal proteins SP-10. As to expression, testis.

The protein localises to the cytoplasmic vesicle. It is found in the secretory vesicle. It localises to the acrosome. This chain is Sperm acrosomal protein FSA-ACR.1, found in Vulpes vulpes (Red fox).